We begin with the raw amino-acid sequence, 532 residues long: O-phosphoserine--tRNA(Cys) ligase (532 aa).

Substrate contacts are provided by residues 188–190, 233–235, 275–276, and asparagine 327; these read HMT, SAS, and YY.

This sequence belongs to the class-II aminoacyl-tRNA synthetase family. O-phosphoseryl-tRNA(Cys) synthetase subfamily. As to quaternary structure, homotetramer. Interacts with SepCysS.

It carries out the reaction tRNA(Cys) + O-phospho-L-serine + ATP = O-phospho-L-seryl-tRNA(Cys) + AMP + diphosphate. Catalyzes the attachment of O-phosphoserine (Sep) to tRNA(Cys). This Methanocella arvoryzae (strain DSM 22066 / NBRC 105507 / MRE50) protein is O-phosphoserine--tRNA(Cys) ligase.